The primary structure comprises 617 residues: Dihydroxy-acid dehydratase (617 aa).

D81 serves as a coordination point for Mg(2+). Position 122 (C122) interacts with [2Fe-2S] cluster. 2 residues coordinate Mg(2+): D123 and K124. Residue K124 is modified to N6-carboxylysine. Residue C195 participates in [2Fe-2S] cluster binding. E490 contacts Mg(2+). S516 acts as the Proton acceptor in catalysis.

The protein belongs to the IlvD/Edd family. As to quaternary structure, homodimer. [2Fe-2S] cluster is required as a cofactor. It depends on Mg(2+) as a cofactor.

The enzyme catalyses (2R)-2,3-dihydroxy-3-methylbutanoate = 3-methyl-2-oxobutanoate + H2O. It catalyses the reaction (2R,3R)-2,3-dihydroxy-3-methylpentanoate = (S)-3-methyl-2-oxopentanoate + H2O. It functions in the pathway amino-acid biosynthesis; L-isoleucine biosynthesis; L-isoleucine from 2-oxobutanoate: step 3/4. It participates in amino-acid biosynthesis; L-valine biosynthesis; L-valine from pyruvate: step 3/4. Functionally, functions in the biosynthesis of branched-chain amino acids. Catalyzes the dehydration of (2R,3R)-2,3-dihydroxy-3-methylpentanoate (2,3-dihydroxy-3-methylvalerate) into 2-oxo-3-methylpentanoate (2-oxo-3-methylvalerate) and of (2R)-2,3-dihydroxy-3-methylbutanoate (2,3-dihydroxyisovalerate) into 2-oxo-3-methylbutanoate (2-oxoisovalerate), the penultimate precursor to L-isoleucine and L-valine, respectively. This chain is Dihydroxy-acid dehydratase, found in Acidiphilium cryptum (strain JF-5).